The chain runs to 488 residues: 26S proteasome non-ATPase regulatory subunit 3 homolog A (488 aa).

Residues Cys240–Asp421 enclose the PCI domain. Residues Arg451 to Phe488 form a disordered region. The span at Thr456 to Ala481 shows a compositional bias: basic and acidic residues.

It belongs to the proteasome subunit S3 family. In terms of assembly, component of the 19S regulatory particle (RP/PA700) lid subcomplex of the 26S proteasome. The 26S proteasome is composed of a core protease (CP), known as the 20S proteasome, capped at one or both ends by the 19S regulatory particle (RP/PA700). The RP/PA700 complex is composed of at least 17 different subunits in two subcomplexes, the base and the lid, which form the portions proximal and distal to the 20S proteolytic core, respectively. Interacts with UCH1 and UCH2. Ubiquitous with highest expression in flowers.

In terms of biological role, acts as a regulatory subunit of the 26 proteasome which is involved in the ATP-dependent degradation of ubiquitinated proteins. This is 26S proteasome non-ATPase regulatory subunit 3 homolog A from Arabidopsis thaliana (Mouse-ear cress).